We begin with the raw amino-acid sequence, 198 residues long: Nucleoid occlusion factor SlmA (198 aa).

The region spanning 9–70 (RNRREEILQA…SLIEFIEDSL (62 aa)) is the HTH tetR-type domain. Positions 33–52 (TTAKLAANVGVSEAALYRHF) form a DNA-binding region, H-T-H motif. The stretch at 119 to 144 (DRLQGRINQLFERIEVQLRQVLREKK) forms a coiled coil.

The protein belongs to the nucleoid occlusion factor SlmA family. Homodimer. Interacts with FtsZ.

It localises to the cytoplasm. It is found in the nucleoid. In terms of biological role, required for nucleoid occlusion (NO) phenomenon, which prevents Z-ring formation and cell division over the nucleoid. Acts as a DNA-associated cell division inhibitor that binds simultaneously chromosomal DNA and FtsZ, and disrupts the assembly of FtsZ polymers. SlmA-DNA-binding sequences (SBS) are dispersed on non-Ter regions of the chromosome, preventing FtsZ polymerization at these regions. This chain is Nucleoid occlusion factor SlmA, found in Yersinia enterocolitica serotype O:8 / biotype 1B (strain NCTC 13174 / 8081).